We begin with the raw amino-acid sequence, 114 residues long: T cell receptor beta variable 9 (114 aa).

A signal peptide spans 1–21; sequence MGFRLLCCVAFCLLGAGPVDS. One can recognise an Ig-like domain in the interval 22-114; the sequence is GVTQTPKHLI…SALYFCASSV (93 aa). A disulfide bond links C42 and C110. A glycan (N-linked (GlcNAc...) asparagine) is linked at N96.

In terms of assembly, alpha-beta TR is a heterodimer composed of an alpha and beta chain; disulfide-linked. The alpha-beta TR is associated with the transmembrane signaling CD3 coreceptor proteins to form the TR-CD3 (TcR or TCR). The assembly of alpha-beta TR heterodimers with CD3 occurs in the endoplasmic reticulum where a single alpha-beta TR heterodimer associates with one CD3D-CD3E heterodimer, one CD3G-CD3E heterodimer and one CD247 homodimer forming a stable octameric structure. CD3D-CD3E and CD3G-CD3E heterodimers preferentially associate with TR alpha and TR beta chains, respectively. The association of the CD247 homodimer is the last step of TcR assembly in the endoplasmic reticulum and is required for transport to the cell surface.

It is found in the cell membrane. In terms of biological role, v region of the variable domain of T cell receptor (TR) beta chain that participates in the antigen recognition. Alpha-beta T cell receptors are antigen specific receptors which are essential to the immune response and are present on the cell surface of T lymphocytes. Recognize peptide-major histocompatibility (MH) (pMH) complexes that are displayed by antigen presenting cells (APC), a prerequisite for efficient T cell adaptive immunity against pathogens. Binding of alpha-beta TR to pMH complex initiates TR-CD3 clustering on the cell surface and intracellular activation of LCK that phosphorylates the ITAM motifs of CD3G, CD3D, CD3E and CD247 enabling the recruitment of ZAP70. In turn ZAP70 phosphorylates LAT, which recruits numerous signaling molecules to form the LAT signalosome. The LAT signalosome propagates signal branching to three major signaling pathways, the calcium, the mitogen-activated protein kinase (MAPK) kinase and the nuclear factor NF-kappa-B (NF-kB) pathways, leading to the mobilization of transcription factors that are critical for gene expression and essential for T cell growth and differentiation. The T cell repertoire is generated in the thymus, by V-(D)-J rearrangement. This repertoire is then shaped by intrathymic selection events to generate a peripheral T cell pool of self-MH restricted, non-autoaggressive T cells. Post-thymic interaction of alpha-beta TR with the pMH complexes shapes TR structural and functional avidity. The protein is T cell receptor beta variable 9 of Homo sapiens (Human).